The following is a 429-amino-acid chain: Glutamate-1-semialdehyde 2,1-aminomutase (429 aa).

N6-(pyridoxal phosphate)lysine is present on lysine 266.

Belongs to the class-III pyridoxal-phosphate-dependent aminotransferase family. HemL subfamily. Pyridoxal 5'-phosphate is required as a cofactor.

The protein resides in the cytoplasm. It carries out the reaction (S)-4-amino-5-oxopentanoate = 5-aminolevulinate. It functions in the pathway porphyrin-containing compound metabolism; protoporphyrin-IX biosynthesis; 5-aminolevulinate from L-glutamyl-tRNA(Glu): step 2/2. The polypeptide is Glutamate-1-semialdehyde 2,1-aminomutase (hemL) (Aeropyrum pernix (strain ATCC 700893 / DSM 11879 / JCM 9820 / NBRC 100138 / K1)).